Reading from the N-terminus, the 564-residue chain is Proline--tRNA ligase (564 aa).

It belongs to the class-II aminoacyl-tRNA synthetase family. ProS type 1 subfamily. As to quaternary structure, homodimer.

It localises to the cytoplasm. The enzyme catalyses tRNA(Pro) + L-proline + ATP = L-prolyl-tRNA(Pro) + AMP + diphosphate. Functionally, catalyzes the attachment of proline to tRNA(Pro) in a two-step reaction: proline is first activated by ATP to form Pro-AMP and then transferred to the acceptor end of tRNA(Pro). As ProRS can inadvertently accommodate and process non-cognate amino acids such as alanine and cysteine, to avoid such errors it has two additional distinct editing activities against alanine. One activity is designated as 'pretransfer' editing and involves the tRNA(Pro)-independent hydrolysis of activated Ala-AMP. The other activity is designated 'posttransfer' editing and involves deacylation of mischarged Ala-tRNA(Pro). The misacylated Cys-tRNA(Pro) is not edited by ProRS. This is Proline--tRNA ligase from Thermosipho melanesiensis (strain DSM 12029 / CIP 104789 / BI429).